The primary structure comprises 231 residues: Aspartate/glutamate leucyltransferase (231 aa).

This sequence belongs to the R-transferase family. Bpt subfamily.

The protein resides in the cytoplasm. It catalyses the reaction N-terminal L-glutamyl-[protein] + L-leucyl-tRNA(Leu) = N-terminal L-leucyl-L-glutamyl-[protein] + tRNA(Leu) + H(+). It carries out the reaction N-terminal L-aspartyl-[protein] + L-leucyl-tRNA(Leu) = N-terminal L-leucyl-L-aspartyl-[protein] + tRNA(Leu) + H(+). Functions in the N-end rule pathway of protein degradation where it conjugates Leu from its aminoacyl-tRNA to the N-termini of proteins containing an N-terminal aspartate or glutamate. The polypeptide is Aspartate/glutamate leucyltransferase (Pseudoalteromonas atlantica (strain T6c / ATCC BAA-1087)).